The following is a 561-amino-acid chain: MACPF domain-containing protein CAD1 (561 aa).

Residues 11–314 (VPSSEALTTT…PPIEDLQYFL (304 aa)) enclose the MACPF domain. The tract at residues 489-514 (VASSGRLEPGGPSTSSSTEEVSGQSG) is disordered. Residues 500-513 (PSTSSSTEEVSGQS) are compositionally biased toward polar residues.

The protein belongs to the complement C6/C7/C8/C9 (TC 1.C.39) family. Mainly expressed in the vascular system.

In terms of biological role, negatively controls the salicylic acid (SA)-mediated pathway of programmed cell death in plant immunity. This Arabidopsis thaliana (Mouse-ear cress) protein is MACPF domain-containing protein CAD1 (CAD1).